Here is a 191-residue protein sequence, read N- to C-terminus: Protein Ves (191 aa).

The protein belongs to the Ves family.

This is Protein Ves from Escherichia fergusonii (strain ATCC 35469 / DSM 13698 / CCUG 18766 / IAM 14443 / JCM 21226 / LMG 7866 / NBRC 102419 / NCTC 12128 / CDC 0568-73).